The sequence spans 242 residues: Ethanolamine ammonia-lyase small subunit (242 aa).

Adenosylcob(III)alamin contacts are provided by valine 155 and glutamate 176.

It belongs to the EutC family. The basic unit is a heterodimer which dimerizes to form tetramers. The heterotetramers trimerize; 6 large subunits form a core ring with 6 small subunits projecting outwards. It depends on adenosylcob(III)alamin as a cofactor.

It localises to the bacterial microcompartment. It carries out the reaction ethanolamine = acetaldehyde + NH4(+). Its pathway is amine and polyamine degradation; ethanolamine degradation. Catalyzes the deamination of various vicinal amino-alcohols to oxo compounds. Allows this organism to utilize ethanolamine as the sole source of nitrogen and carbon in the presence of external vitamin B12. In Clostridium acetobutylicum (strain ATCC 824 / DSM 792 / JCM 1419 / IAM 19013 / LMG 5710 / NBRC 13948 / NRRL B-527 / VKM B-1787 / 2291 / W), this protein is Ethanolamine ammonia-lyase small subunit.